The sequence spans 624 residues: tRNA uridine 5-carboxymethylaminomethyl modification enzyme MnmG (624 aa).

14–19 is a binding site for FAD; it reads GAGHAG. NAD(+) is bound at residue 273-287; it reads GTRYCPSFEDKVVRF.

Belongs to the MnmG family. Homodimer. Heterotetramer of two MnmE and two MnmG subunits. FAD is required as a cofactor.

It is found in the cytoplasm. NAD-binding protein involved in the addition of a carboxymethylaminomethyl (cmnm) group at the wobble position (U34) of certain tRNAs, forming tRNA-cmnm(5)s(2)U34. In Syntrophomonas wolfei subsp. wolfei (strain DSM 2245B / Goettingen), this protein is tRNA uridine 5-carboxymethylaminomethyl modification enzyme MnmG.